Reading from the N-terminus, the 427-residue chain is Septin-8 (427 aa).

The region spanning 39–305 is the Septin-type G domain; that stretch reads QGFCFNILCV…ELYRRCKLEE (267 aa). The segment at 49-56 is G1 motif; the sequence is GETGIGKS. Residues 49-56, Gly104, 185-193, Gly239, and Arg254 contribute to the GTP site; these read GETGIGKS and KADTISKSE. The interval 101–104 is G3 motif; it reads DTVG. Residues 184 to 187 form a G4 motif region; it reads AKAD. Residues 321-409 are a coiled coil; that stretch reads QETYEAKRKE…KAAMEALQSQ (89 aa). The disordered stretch occupies residues 373-427; the sequence is RVHQEESKKVEDKRRDLEEEMNSFNRRKAAMEALQSQSFQATSQQPLKKDKDRKN. Positions 374–389 are enriched in basic and acidic residues; sequence VHQEESKKVEDKRRDL. Polar residues predominate over residues 406–418; that stretch reads LQSQSFQATSQQP.

Belongs to the TRAFAC class TrmE-Era-EngA-EngB-Septin-like GTPase superfamily. Septin GTPase family.

It is found in the cytoplasm. Its subcellular location is the cytoskeleton. The protein resides in the synapse. It localises to the cell projection. The protein localises to the axon. It is found in the cytoplasmic vesicle. Its subcellular location is the secretory vesicle. The protein resides in the synaptic vesicle membrane. It localises to the presynapse. This Xenopus tropicalis (Western clawed frog) protein is Septin-8.